An 87-amino-acid polypeptide reads, in one-letter code: MDKQEKSLIINEFKKSESDTGSTEVQVALLTARIHQLTTHMIANKHDFHTKRSLLTLVGRRRRLLSYMRNSNGAGYQELIANLGLRK.

The protein belongs to the universal ribosomal protein uS15 family. As to quaternary structure, part of the 30S ribosomal subunit. Forms a bridge to the 50S subunit in the 70S ribosome, contacting the 23S rRNA.

One of the primary rRNA binding proteins, it binds directly to 16S rRNA where it helps nucleate assembly of the platform of the 30S subunit by binding and bridging several RNA helices of the 16S rRNA. In terms of biological role, forms an intersubunit bridge (bridge B4) with the 23S rRNA of the 50S subunit in the ribosome. The sequence is that of Small ribosomal subunit protein uS15 from Dehalococcoides mccartyi (strain ATCC BAA-2100 / JCM 16839 / KCTC 5957 / BAV1).